The following is a 244-amino-acid chain: Transcriptional activator protein CarR (244 aa).

The HTH luxR-type domain occupies 162-227 (DNSRNALLSP…HAITKALELN (66 aa)). The H-T-H motif DNA-binding region spans 186–205 (YKEVSRILGISEVTVKFHIN).

Belongs to the autoinducer-regulated transcriptional regulatory protein family.

Its function is as follows. Functions as an OHLL responsive transcriptional regulator which acts in the control of the biosynthesis of carbapenem antibiotics. The protein is Transcriptional activator protein CarR (carR) of Pectobacterium carotovorum subsp. carotovorum (Erwinia carotovora subsp. carotovora).